Here is a 358-residue protein sequence, read N- to C-terminus: UDP-N-acetylglucosamine--N-acetylmuramyl-(pentapeptide) pyrophosphoryl-undecaprenol N-acetylglucosamine transferase (358 aa).

Residues 11–13, Asn120, Arg161, Ser188, and Gln282 each bind UDP-N-acetyl-alpha-D-glucosamine; that span reads TGG.

It belongs to the glycosyltransferase 28 family. MurG subfamily.

The protein localises to the cell inner membrane. It carries out the reaction di-trans,octa-cis-undecaprenyl diphospho-N-acetyl-alpha-D-muramoyl-L-alanyl-D-glutamyl-meso-2,6-diaminopimeloyl-D-alanyl-D-alanine + UDP-N-acetyl-alpha-D-glucosamine = di-trans,octa-cis-undecaprenyl diphospho-[N-acetyl-alpha-D-glucosaminyl-(1-&gt;4)]-N-acetyl-alpha-D-muramoyl-L-alanyl-D-glutamyl-meso-2,6-diaminopimeloyl-D-alanyl-D-alanine + UDP + H(+). The protein operates within cell wall biogenesis; peptidoglycan biosynthesis. Its function is as follows. Cell wall formation. Catalyzes the transfer of a GlcNAc subunit on undecaprenyl-pyrophosphoryl-MurNAc-pentapeptide (lipid intermediate I) to form undecaprenyl-pyrophosphoryl-MurNAc-(pentapeptide)GlcNAc (lipid intermediate II). The chain is UDP-N-acetylglucosamine--N-acetylmuramyl-(pentapeptide) pyrophosphoryl-undecaprenol N-acetylglucosamine transferase from Parasynechococcus marenigrum (strain WH8102).